The chain runs to 177 residues: MSDLTTIARPYAKAAFDFALEKDQLDQWGQMLSFAAEVAKNEQMNELLTGSVSADKMAEIFVAVCGEQVDTHGQNLLKVMAENGRLAALPDVCTEFYTLKKEHEKEIDVEVISATELSDEQLANIGSKLEKRLERKVKLNCSVDETLLGGVIIRAGDLVIDDSARGRLNRLSDALQS.

This sequence belongs to the ATPase delta chain family. F-type ATPases have 2 components, F(1) - the catalytic core - and F(0) - the membrane proton channel. F(1) has five subunits: alpha(3), beta(3), gamma(1), delta(1), epsilon(1). F(0) has three main subunits: a(1), b(2) and c(10-14). The alpha and beta chains form an alternating ring which encloses part of the gamma chain. F(1) is attached to F(0) by a central stalk formed by the gamma and epsilon chains, while a peripheral stalk is formed by the delta and b chains.

It localises to the cell inner membrane. Functionally, f(1)F(0) ATP synthase produces ATP from ADP in the presence of a proton or sodium gradient. F-type ATPases consist of two structural domains, F(1) containing the extramembraneous catalytic core and F(0) containing the membrane proton channel, linked together by a central stalk and a peripheral stalk. During catalysis, ATP synthesis in the catalytic domain of F(1) is coupled via a rotary mechanism of the central stalk subunits to proton translocation. In terms of biological role, this protein is part of the stalk that links CF(0) to CF(1). It either transmits conformational changes from CF(0) to CF(1) or is implicated in proton conduction. This Vibrio alginolyticus protein is ATP synthase subunit delta.